Consider the following 397-residue polypeptide: Lysophospholipid transporter LplT (397 aa).

Residues 1-17 are Periplasmic-facing; it reads MSESVHTNTSLWSKGMK. A helical membrane pass occupies residues 18–38; the sequence is AVIVAQFLSAFGDNALLFATL. Residues 39–52 are Cytoplasmic-facing; sequence ALLKAQFYPEWSQP. The chain crosses the membrane as a helical span at residues 53–73; that stretch reads ILQMVFVGAYILFAPFVGQVA. Residues 74–90 are Periplasmic-facing; it reads DSFAKGRVMMFANGLKL. A helical membrane pass occupies residues 91–111; that stretch reads LGAASICFGINPFLGYTLVGV. The Cytoplasmic portion of the chain corresponds to 112-144; the sequence is GAAAYSPAKYGILGELTTGSKLVKANGLMEAST. A helical transmembrane segment spans residues 145-165; it reads IAAILLGSVAGGVLADWHVLV. A topological domain (periplasmic) is located at residue Ala-166. The helical transmembrane segment at 167-187 threads the bilayer; that stretch reads LAACALAYGGAVVANIYIPKL. The Cytoplasmic segment spans residues 188 to 226; the sequence is AAARPGQSWNLINMTRSFLNACTSLWRNGETRFSLVGTS. A helical transmembrane segment spans residues 227 to 247; sequence LFWGAGVTLRFLLVLWVPVAL. Topologically, residues 248–256 are periplasmic; that stretch reads GITDNATPT. Residues 257 to 277 form a helical membrane-spanning segment; that stretch reads YLNAMVAIGIVVGAGAAAKLV. Residues 278–280 are Cytoplasmic-facing; sequence TLE. Residues 281–301 form a helical membrane-spanning segment; sequence TVSRCMPAGILIGVVVLIFSL. Topologically, residues 302-304 are periplasmic; it reads QHE. A helical transmembrane segment spans residues 305-325; that stretch reads LLPAYALLMLIGVLGGFFVVP. The Cytoplasmic segment spans residues 326 to 343; it reads LNALLQERGKKSVGAGNA. Residues 344–364 form a helical membrane-spanning segment; it reads IAVQNLGENSAMLLMLGIYSL. The Periplasmic portion of the chain corresponds to 365 to 366; sequence AV. A helical membrane pass occupies residues 367–387; the sequence is MVGIPVVPIGIGFGALFALAI. The Cytoplasmic portion of the chain corresponds to 388 to 397; sequence TALWIWQRRY.

The protein belongs to the major facilitator superfamily. LplT (TC 2.A.1.42) family.

Its subcellular location is the cell inner membrane. Catalyzes the facilitated diffusion of 2-acyl-glycero-3-phosphoethanolamine (2-acyl-GPE) into the cell. This chain is Lysophospholipid transporter LplT, found in Escherichia coli O127:H6 (strain E2348/69 / EPEC).